The following is an 805-amino-acid chain: Cell division cycle 5-related protein (805 aa).

2 HTH myb-type domains span residues 1–58 and 59–108; these read MPRI…DPSI and KKTE…DQAQ. 2 DNA-binding regions (H-T-H motif) span residues 31 to 54 and 82 to 104; these read WSRI…YEWL and WRTI…EYLL. Basic and acidic residues predominate over residues 108 to 127; sequence QAKEGDKDEGDDPRKLRPGE. Disordered stretches follow at residues 108–143, 246–293, 409–442, and 530–556; these read QAKE…DPID, HLEG…HVKK, LSTP…QRSV, and LERR…VLRP. Residues 142–193 are a coiled coil; the sequence is IDMDEDELEMLSEARARLANTQGKKAKRKAREKQLEEARRLAALQKRRELRA. The span at 246–274 shows a compositional bias: basic and acidic residues; it reads HLEGKMRDEIEQQERKKDKERMKKKKESD. Coiled-coil stretches lie at residues 511 to 542 and 678 to 804; these read EDAA…VQRE and YTRA…SKLQ.

The protein belongs to the CEF1 family. As to quaternary structure, component of the precatalytic, catalytic and postcatalytic spliceosome complexes.

The protein resides in the nucleus. It is found in the cytoplasm. DNA-binding protein involved in cell cycle control. May act as a transcription activator. Plays a role in pre-mRNA splicing as core component of precatalytic, catalytic and postcatalytic spliceosomal complexes. May also play a role in the response to DNA damage (DDR). The chain is Cell division cycle 5-related protein (cdc5l) from Nematostella vectensis (Starlet sea anemone).